The following is a 216-amino-acid chain: Imidazole glycerol phosphate synthase subunit HisH (216 aa).

Residues 2–216 (RVAIIDYGSG…LIANFLKWKP (215 aa)) form the Glutamine amidotransferase type-1 domain. The active-site Nucleophile is C88. Active-site residues include H196 and E198.

Heterodimer of HisH and HisF.

It localises to the cytoplasm. The enzyme catalyses 5-[(5-phospho-1-deoxy-D-ribulos-1-ylimino)methylamino]-1-(5-phospho-beta-D-ribosyl)imidazole-4-carboxamide + L-glutamine = D-erythro-1-(imidazol-4-yl)glycerol 3-phosphate + 5-amino-1-(5-phospho-beta-D-ribosyl)imidazole-4-carboxamide + L-glutamate + H(+). It catalyses the reaction L-glutamine + H2O = L-glutamate + NH4(+). It functions in the pathway amino-acid biosynthesis; L-histidine biosynthesis; L-histidine from 5-phospho-alpha-D-ribose 1-diphosphate: step 5/9. Functionally, IGPS catalyzes the conversion of PRFAR and glutamine to IGP, AICAR and glutamate. The HisH subunit catalyzes the hydrolysis of glutamine to glutamate and ammonia as part of the synthesis of IGP and AICAR. The resulting ammonia molecule is channeled to the active site of HisF. This chain is Imidazole glycerol phosphate synthase subunit HisH, found in Brucella suis biovar 1 (strain 1330).